The primary structure comprises 345 residues: Tetraacyldisaccharide 4'-kinase (345 aa).

61–68 (TAGGTGKT) contributes to the ATP binding site.

It belongs to the LpxK family.

The enzyme catalyses a lipid A disaccharide + ATP = a lipid IVA + ADP + H(+). It functions in the pathway glycolipid biosynthesis; lipid IV(A) biosynthesis; lipid IV(A) from (3R)-3-hydroxytetradecanoyl-[acyl-carrier-protein] and UDP-N-acetyl-alpha-D-glucosamine: step 6/6. Functionally, transfers the gamma-phosphate of ATP to the 4'-position of a tetraacyldisaccharide 1-phosphate intermediate (termed DS-1-P) to form tetraacyldisaccharide 1,4'-bis-phosphate (lipid IVA). This is Tetraacyldisaccharide 4'-kinase from Xanthomonas axonopodis pv. citri (strain 306).